The sequence spans 330 residues: Methionyl-tRNA formyltransferase (330 aa).

Residue 121–124 (SLLP) participates in (6S)-5,6,7,8-tetrahydrofolate binding.

This sequence belongs to the Fmt family.

The catalysed reaction is L-methionyl-tRNA(fMet) + (6R)-10-formyltetrahydrofolate = N-formyl-L-methionyl-tRNA(fMet) + (6S)-5,6,7,8-tetrahydrofolate + H(+). Functionally, attaches a formyl group to the free amino group of methionyl-tRNA(fMet). The formyl group appears to play a dual role in the initiator identity of N-formylmethionyl-tRNA by promoting its recognition by IF2 and preventing the misappropriation of this tRNA by the elongation apparatus. The protein is Methionyl-tRNA formyltransferase of Burkholderia cenocepacia (strain ATCC BAA-245 / DSM 16553 / LMG 16656 / NCTC 13227 / J2315 / CF5610) (Burkholderia cepacia (strain J2315)).